Here is a 453-residue protein sequence, read N- to C-terminus: Putative sodium-coupled neutral amino acid transporter 11 (453 aa).

Residues 1–34 are disordered; sequence MSYQQPQLRGPLQRETDPSDRESLVSGHEHGGKS. A compositionally biased stretch (basic and acidic residues) spans 12 to 32; that stretch reads LQRETDPSDRESLVSGHEHGG. A run of 11 helical transmembrane segments spans residues 39–59, 66–86, 106–126, 152–172, 179–199, 222–242, 262–282, 299–319, 337–357, 359–379, and 399–419; these read AVFN…PYSM, LGIL…VLLI, GFPG…IAMI, FISR…PLSL, LGKI…VVVT, AIQA…CFLV, ILVS…TFTG, VTFG…IECF, VFHV…SLLI, CLGI…IFII, and MACV…VMAI.

It belongs to the amino acid/polyamine transporter 2 family. As to expression, widely expressed.

Its subcellular location is the membrane. Functionally, putative sodium-dependent amino acid/proton antiporter. In Rattus norvegicus (Rat), this protein is Putative sodium-coupled neutral amino acid transporter 11 (Slc38a11).